Here is a 327-residue protein sequence, read N- to C-terminus: Voltage-dependent calcium channel gamma-4 subunit (327 aa).

The Cytoplasmic portion of the chain corresponds to 1-9; it reads MVRCDRGLQ. A helical membrane pass occupies residues 10–30; it reads MLLTTAGAFAAFSLMAIAIGT. Residues 31 to 107 lie on the Extracellular side of the membrane; the sequence is DYWLYSSAHI…EYLLRIVRAS (77 aa). 2 N-linked (GlcNAc...) asparagine glycosylation sites follow: Asn-42 and Asn-45. A helical transmembrane segment spans residues 108-128; the sequence is SVFPILSTILLLLGGLCIGAG. At 129–136 the chain is on the cytoplasmic side; it reads RIYSRKNN. A helical membrane pass occupies residues 137–157; it reads IVLSAGILFVAAGLSNIIGII. Topologically, residues 158–186 are extracellular; it reads VYISSNTGDPSDKRDEDKKNHYNYGWSFY. The helical transmembrane segment at 187-207 threads the bilayer; sequence FGALSFIVAETVGVLAVNIYI. Residues 208 to 327 lie on the Cytoplasmic side of the membrane; sequence EKNKELRFKT…SMLNRRTTPV (120 aa). Positions 235–261 are disordered; that stretch reads SYRYRRRRSRSSSRSTEASPSRDVSPM. A compositionally biased stretch (low complexity) spans 246-256; it reads SSRSTEASPSR. Ser-259 bears the Phosphoserine mark.

This sequence belongs to the PMP-22/EMP/MP20 family. CACNG subfamily. As to quaternary structure, interacts with CACNA1C. Identified in a complex with the L-type calcium channel subunits CACNA1C, CACNA2D1 and either CACNB1 or CACNB2. Acts as an auxiliary subunit for AMPA-selective glutamate receptors (AMPARs). Interacts with GRIA1. Detected in heart left ventricle.

It is found in the cell membrane. In terms of biological role, regulates the activity of L-type calcium channels that contain CACNA1C as pore-forming subunit. Regulates the trafficking and gating properties of AMPA-selective glutamate receptors (AMPARs), including GRIA1 and GRIA4. Promotes their targeting to the cell membrane and synapses and modulates their gating properties by slowing their rates of activation, deactivation and desensitization and by mediating their resensitization. This is Voltage-dependent calcium channel gamma-4 subunit (CACNG4) from Homo sapiens (Human).